Reading from the N-terminus, the 537-residue chain is Glutamyl-tRNA reductase, chloroplastic (537 aa).

A chloroplast-targeting transit peptide spans methionine 1 to arginine 48. Substrate-binding positions include threonine 134–arginine 137, serine 194, glutamate 199–glutamine 201, and glutamine 205. Cysteine 135 serves as the catalytic Nucleophile. Position 276–281 (glycine 276–glycine 281) interacts with NADP(+).

Belongs to the glutamyl-tRNA reductase family.

The protein resides in the plastid. The protein localises to the chloroplast. The catalysed reaction is (S)-4-amino-5-oxopentanoate + tRNA(Glu) + NADP(+) = L-glutamyl-tRNA(Glu) + NADPH + H(+). It participates in porphyrin-containing compound metabolism; protoporphyrin-IX biosynthesis; 5-aminolevulinate from L-glutamyl-tRNA(Glu): step 1/2. In terms of biological role, catalyzes the NADPH-dependent reduction of glutamyl-tRNA(Glu) to glutamate 1-semialdehyde (GSA). The chain is Glutamyl-tRNA reductase, chloroplastic from Oryza sativa subsp. indica (Rice).